The chain runs to 310 residues: Protoheme IX farnesyltransferase 2 (310 aa).

9 consecutive transmembrane segments (helical) span residues 25–45 (PGII…AAKG), 49–69 (LVLM…GCAI), 98–118 (HVLL…ALFT), 121–141 (LALL…SLYM), 145–165 (SVYG…VGYC), 176–196 (VILL…IAIF), 222–242 (IVLY…AGYT), 245–265 (AFMA…LKGY), and 277–297 (QVFG…ALDF).

Belongs to the UbiA prenyltransferase family. Protoheme IX farnesyltransferase subfamily.

It is found in the cell inner membrane. The catalysed reaction is heme b + (2E,6E)-farnesyl diphosphate + H2O = Fe(II)-heme o + diphosphate. The protein operates within porphyrin-containing compound metabolism; heme O biosynthesis; heme O from protoheme: step 1/1. Converts heme B (protoheme IX) to heme O by substitution of the vinyl group on carbon 2 of heme B porphyrin ring with a hydroxyethyl farnesyl side group. The polypeptide is Protoheme IX farnesyltransferase 2 (Shewanella sp. (strain MR-4)).